The following is a 313-amino-acid chain: uncharacterized protein (313 aa).

An N-acetyltransferase domain is found at 6-152; sequence YDILENPEPN…YHASMEKMTG (147 aa).

In terms of biological role, to the C-terminal of C.elegans F21C10.9. This is an uncharacterized protein from Caenorhabditis elegans.